A 424-amino-acid chain; its full sequence is MSPNSKGVEILSIGTELLLGNIINTNAQWISEQLSQLGLNHFRQSTVGDNCDRIVKVIQEISKRSNLLITTGGLGPTPDDLTTEAIAKSFNVNLFERPHLWDEIKQKLPNSKLQDDSSSLRKQCLFPKNAQIINNPRGTAPGMIWEPIEGFTILTFPGVPSEMKTMWEETACDFIKTKFSDNYSFFSNTLKFAGIGESSVAEKINDLLNLKNPTVAPYANLGEVKLRITARAKNHLEAKNIIQPVKEKLKKDFSKFIFGENDDTLPSVLIRELTERNQTIVFAESCTGGLLSSSLTSISGSSKVFKGSVVSYSNELKNSLLNISEEKLTKYGAVSEEVCESMAINAKEKLGADWAIAISGIAGPKGGSQDKPVGLVYISISGPNNHITNIKKLFNSTRNRVEIQTLSVNVCLNSLRLILLSNSK.

The protein belongs to the CinA family.

In Prochlorococcus marinus (strain AS9601), this protein is CinA-like protein.